Here is a 478-residue protein sequence, read N- to C-terminus: MKSQILKLQQTLTKKPASINPLLQQIDGAINEHWSSNFLLKNTVEWAQAQAPKNRSKSPLNNIPFVLKDNIATKGIVTTGGSRFLEDYIPPFSATVFELLNNSGALLVGKANLDEFGLGGTGLHSGFGFVHHPWNETLIPGGSSSGSAYAVARGIVPFSIGTDTGDSVRRPASICNIVGFKPTYGLISRNGVYPYAPSLDHVGIFARYVYDVALVSDEIIKHDKADFSAQKSPDAGKFTRSLKESFNKQIKIGYLKPLEEWFDIELSKKWNSLKERITLEGCELIPFHFPLELLEVIDPVYKLISYSEAVSCYSNLTGIVFGQKLFEPNQASDFSKTITANRDRFFGEQLKRRFIIGAFGTDKNNFTKYFEKAQKIRRVMVDAYLNLFKEADFIVSPSASGFTKTIAAVQKGESFTNLVDDFLQLANFAGNPSITIPWLVKQKDQTIGLSVNANCFHDKQLLQVAAWLEELFQIEHDD.

Residues Lys68 and Ser143 each act as charge relay system in the active site. Catalysis depends on Ser167, which acts as the Acyl-ester intermediate.

The protein belongs to the amidase family. GatA subfamily. As to quaternary structure, heterotrimer of A, B and C subunits.

It catalyses the reaction L-glutamyl-tRNA(Gln) + L-glutamine + ATP + H2O = L-glutaminyl-tRNA(Gln) + L-glutamate + ADP + phosphate + H(+). In terms of biological role, allows the formation of correctly charged Gln-tRNA(Gln) through the transamidation of misacylated Glu-tRNA(Gln) in organisms which lack glutaminyl-tRNA synthetase. The reaction takes place in the presence of glutamine and ATP through an activated gamma-phospho-Glu-tRNA(Gln). The sequence is that of Glutamyl-tRNA(Gln) amidotransferase subunit A (gatA) from Mycoplasma pneumoniae (strain ATCC 29342 / M129 / Subtype 1) (Mycoplasmoides pneumoniae).